We begin with the raw amino-acid sequence, 273 residues long: 2,3,4,5-tetrahydropyridine-2,6-dicarboxylate N-succinyltransferase (273 aa).

Substrate contacts are provided by Arg104 and Asp141.

This sequence belongs to the transferase hexapeptide repeat family. Homotrimer.

It is found in the cytoplasm. It carries out the reaction (S)-2,3,4,5-tetrahydrodipicolinate + succinyl-CoA + H2O = (S)-2-succinylamino-6-oxoheptanedioate + CoA. Its pathway is amino-acid biosynthesis; L-lysine biosynthesis via DAP pathway; LL-2,6-diaminopimelate from (S)-tetrahydrodipicolinate (succinylase route): step 1/3. This chain is 2,3,4,5-tetrahydropyridine-2,6-dicarboxylate N-succinyltransferase, found in Buchnera aphidicola subsp. Schizaphis graminum (strain Sg).